A 149-amino-acid polypeptide reads, in one-letter code: Globin (149 aa).

The region spanning 2–149 is the Globin domain; the sequence is VLTKDEFDSL…KIFTGVAGQL (148 aa). His-100 provides a ligand contact to heme.

The protein belongs to the globin family. Monomer.

Its function is as follows. Oxygen binding protein. The protein is Globin of Isoparorchis hypselobagri (Giant trematode).